A 295-amino-acid chain; its full sequence is Keratin-like protein KRT222 (295 aa).

The IF rod domain occupies 1 to 150 (MELSQLLNEI…HLLEKEEIRY (150 aa)). A coiled-coil region spans residues 2-150 (ELSQLLNEIR…HLLEKEEIRY (149 aa)).

It belongs to the intermediate filament family.

In Homo sapiens (Human), this protein is Keratin-like protein KRT222 (KRT222).